Consider the following 395-residue polypeptide: ASTRA-associated protein 1 (395 aa).

3 WD repeats span residues 7 to 48, 221 to 260, and 343 to 386; these read AHVS…PIAS, HYPEPVLSLAHDRTERRVFSSSTTDQVCVHNIPTPDLPVV, and INPG…TGYN.

This sequence belongs to the WD repeat ASA1 family. As to quaternary structure, component of the ASTRA chromatin remodeling machinery complex.

It is found in the nucleus. Functionally, component of the ASTRA complex involved in chromatin remodeling. The chain is ASTRA-associated protein 1 (ASA1) from Eremothecium gossypii (strain ATCC 10895 / CBS 109.51 / FGSC 9923 / NRRL Y-1056) (Yeast).